The following is a 66-amino-acid chain: LYR motif-containing protein PHYPADRAFT_186863 (66 aa).

This sequence belongs to the complex I LYR family. LYRM9 subfamily.

In Physcomitrium patens (Spreading-leaved earth moss), this protein is LYR motif-containing protein PHYPADRAFT_186863.